Reading from the N-terminus, the 214-residue chain is Adenylate kinase (214 aa).

14–19 contributes to the ATP binding site; that stretch reads GSGKGT. The segment at 34 to 63 is NMP; sequence SSGDLFRSAIKSATPLGSKAAEYINKGLLV. AMP contacts are provided by residues S35, R40, 61 to 63, 89 to 92, and Q96; these read LLV and GFPR. The interval 130-163 is LID; sequence SRFICPACNYVYNQSQGFKECPTCHVALIRRSDD. ATP is bound at residue R131. The Zn(2+) site is built by C134 and C137. 140–141 contributes to the ATP binding site; sequence VY. Residues C150 and C153 each coordinate Zn(2+). 2 residues coordinate AMP: R160 and R171. ATP is bound at residue T199.

It belongs to the adenylate kinase family. As to quaternary structure, monomer.

Its subcellular location is the cytoplasm. The catalysed reaction is AMP + ATP = 2 ADP. It participates in purine metabolism; AMP biosynthesis via salvage pathway; AMP from ADP: step 1/1. Catalyzes the reversible transfer of the terminal phosphate group between ATP and AMP. Plays an important role in cellular energy homeostasis and in adenine nucleotide metabolism. The chain is Adenylate kinase from Chlamydia caviae (strain ATCC VR-813 / DSM 19441 / 03DC25 / GPIC) (Chlamydophila caviae).